The sequence spans 158 residues: D-aminoacyl-tRNA deacylase (158 aa).

A Gly-cisPro motif, important for rejection of L-amino acids motif is present at residues 138–139; the sequence is GP.

It belongs to the DTD family. As to quaternary structure, homodimer.

It localises to the cytoplasm. It carries out the reaction glycyl-tRNA(Ala) + H2O = tRNA(Ala) + glycine + H(+). The catalysed reaction is a D-aminoacyl-tRNA + H2O = a tRNA + a D-alpha-amino acid + H(+). Functionally, an aminoacyl-tRNA editing enzyme that deacylates mischarged D-aminoacyl-tRNAs. Hydrolyzes correctly charged, achiral, glycyl-tRNA(Gly). Deacylates mischarged endogenous and E.coli glycyl-tRNA(Ala), protecting cells against glycine mischarging by AlaRS. Acts via tRNA-based rather than protein-based catalysis; rejects L-amino acids rather than detecting D-amino acids in the active site. By recycling D-aminoacyl-tRNA to D-amino acids and free tRNA molecules, this enzyme counteracts the toxicity associated with the formation of D-aminoacyl-tRNA entities in vivo and helps enforce protein L-homochirality. This Drosophila melanogaster (Fruit fly) protein is D-aminoacyl-tRNA deacylase.